The chain runs to 398 residues: L-rhamnonate dehydratase (398 aa).

Substrate-binding residues include His-22 and Arg-48. 3 residues coordinate Mg(2+): Asp-214, Glu-241, and Glu-269. The active-site Proton acceptor is His-319. Glu-339 contacts substrate.

This sequence belongs to the mandelate racemase/muconate lactonizing enzyme family. RhamD subfamily. In terms of assembly, homooctamer; tetramer of dimers. The cofactor is Mg(2+).

It carries out the reaction L-rhamnonate = 2-dehydro-3-deoxy-L-rhamnonate + H2O. In terms of biological role, catalyzes the dehydration of L-rhamnonate to 2-keto-3-deoxy-L-rhamnonate (KDR). This Verminephrobacter eiseniae (strain EF01-2) protein is L-rhamnonate dehydratase.